A 495-amino-acid chain; its full sequence is Ectonucleoside triphosphate diphosphohydrolase 8 (495 aa).

The Cytoplasmic segment spans residues 1-8; it reads MGLSRKEQ. A helical membrane pass occupies residues 9–29; that stretch reads VFLALLGASGVSGLTALILLL. Topologically, residues 30–471 are extracellular; the sequence is VEATSVLLPT…AESYGVWVAK (442 aa). N-linked (GlcNAc...) asparagine glycosylation is present at N67. Residues C78 and C102 are joined by a disulfide bond. Residue E168 is the Proton acceptor of the active site. A disulfide bridge connects residues C246 and C292. The N-linked (GlcNAc...) asparagine glycan is linked to N304. A disulfide bridge connects residues C329 and C335. The N-linked (GlcNAc...) asparagine glycan is linked to N363. A disulfide bond links C381 and C403. A helical transmembrane segment spans residues 472–492; that stretch reads VVFMVLALVAVVGAALVQLFW. At 493-495 the chain is on the cytoplasmic side; the sequence is LQD.

Belongs to the GDA1/CD39 NTPase family. Ca(2+) is required as a cofactor. Mg(2+) serves as cofactor. N-glycosylated.

Its subcellular location is the cell membrane. It catalyses the reaction a ribonucleoside 5'-triphosphate + 2 H2O = a ribonucleoside 5'-phosphate + 2 phosphate + 2 H(+). Its activity is regulated as follows. Not inhibited by ARL 67156. Functionally, canalicular ectonucleoside NTPDase responsible for the main hepatic NTPDase activity. Ectonucleoside NTPDases catalyze the hydrolysis of gamma- and beta-phosphate residues of nucleotides, playing a central role in concentration of extracellular nucleotides. Has activity toward ATP, ADP, UTP and UDP, but not toward AMP. In Homo sapiens (Human), this protein is Ectonucleoside triphosphate diphosphohydrolase 8 (ENTPD8).